The following is an 808-amino-acid chain: Transducin beta-like protein 3 (808 aa).

N-acetylalanine is present on Ala-2. WD repeat units follow at residues 64–105, 107–146, 149–190, 193–232, 245–284, 290–329, 332–372, 374–413, 419–459, 477–516, 519–560, 562–602, and 604–642; these read EDQE…RLWK, IHTA…GTHH, GSPG…CLAV, AHYS…ATRT, LPEE…CVYT, GPGQ…LQKQ, GYSE…CQIL, GHTD…QVMC, GHTH…LSKN, CHDK…LLGV, GHRR…KTFE, HDAS…RTLD, and HEDK…EQAE. Position 257 is a phosphoserine (Ser-257). A Glycyl lysine isopeptide (Lys-Gly) (interchain with G-Cter in SUMO2) cross-link involves residue Lys-407.

In terms of assembly, part of the small subunit (SSU) processome, composed of more than 70 proteins and the RNA chaperone small nucleolar RNA (snoRNA) U3.

It localises to the nucleus. The protein localises to the nucleolus. Part of the small subunit (SSU) processome, first precursor of the small eukaryotic ribosomal subunit. During the assembly of the SSU processome in the nucleolus, many ribosome biogenesis factors, an RNA chaperone and ribosomal proteins associate with the nascent pre-rRNA and work in concert to generate RNA folding, modifications, rearrangements and cleavage as well as targeted degradation of pre-ribosomal RNA by the RNA exosome. The sequence is that of Transducin beta-like protein 3 from Homo sapiens (Human).